The following is a 202-amino-acid chain: Imidazoleglycerol-phosphate dehydratase (202 aa).

Belongs to the imidazoleglycerol-phosphate dehydratase family.

The protein localises to the cytoplasm. It catalyses the reaction D-erythro-1-(imidazol-4-yl)glycerol 3-phosphate = 3-(imidazol-4-yl)-2-oxopropyl phosphate + H2O. It participates in amino-acid biosynthesis; L-histidine biosynthesis; L-histidine from 5-phospho-alpha-D-ribose 1-diphosphate: step 6/9. The polypeptide is Imidazoleglycerol-phosphate dehydratase (Brucella suis (strain ATCC 23445 / NCTC 10510)).